A 378-amino-acid chain; its full sequence is Queuine tRNA-ribosyltransferase (378 aa).

The active-site Proton acceptor is aspartate 92. Residues 92–96, aspartate 146, glutamine 188, and glycine 215 each bind substrate; that span reads DSGGF. The tract at residues 246–252 is RNA binding; it reads GVGTHLE. The active-site Nucleophile is the aspartate 265. The segment at 270–274 is RNA binding; important for wobble base 34 recognition; that stretch reads TRLAR. Positions 303, 305, 308, and 334 each coordinate Zn(2+).

The protein belongs to the queuine tRNA-ribosyltransferase family. Homodimer. Within each dimer, one monomer is responsible for RNA recognition and catalysis, while the other monomer binds to the replacement base PreQ1. Zn(2+) is required as a cofactor.

The catalysed reaction is 7-aminomethyl-7-carbaguanine + guanosine(34) in tRNA = 7-aminomethyl-7-carbaguanosine(34) in tRNA + guanine. The protein operates within tRNA modification; tRNA-queuosine biosynthesis. In terms of biological role, catalyzes the base-exchange of a guanine (G) residue with the queuine precursor 7-aminomethyl-7-deazaguanine (PreQ1) at position 34 (anticodon wobble position) in tRNAs with GU(N) anticodons (tRNA-Asp, -Asn, -His and -Tyr). Catalysis occurs through a double-displacement mechanism. The nucleophile active site attacks the C1' of nucleotide 34 to detach the guanine base from the RNA, forming a covalent enzyme-RNA intermediate. The proton acceptor active site deprotonates the incoming PreQ1, allowing a nucleophilic attack on the C1' of the ribose to form the product. After dissociation, two additional enzymatic reactions on the tRNA convert PreQ1 to queuine (Q), resulting in the hypermodified nucleoside queuosine (7-(((4,5-cis-dihydroxy-2-cyclopenten-1-yl)amino)methyl)-7-deazaguanosine). This chain is Queuine tRNA-ribosyltransferase, found in Thermosynechococcus vestitus (strain NIES-2133 / IAM M-273 / BP-1).